Reading from the N-terminus, the 135-residue chain is NADH-quinone oxidoreductase subunit K (135 aa).

The next 3 membrane-spanning stretches (helical) occupy residues 33–53 (VLGL…FAIG), 63–83 (FLFM…AFVV), and 95–115 (IMFI…LAIL).

Belongs to the complex I subunit 4L family. In terms of assembly, NDH-1 is composed of 14 different subunits. Subunits NuoA, H, J, K, L, M, N constitute the membrane sector of the complex.

It is found in the cell inner membrane. It carries out the reaction a quinone + NADH + 5 H(+)(in) = a quinol + NAD(+) + 4 H(+)(out). Its function is as follows. NDH-1 shuttles electrons from NADH, via FMN and iron-sulfur (Fe-S) centers, to quinones in the respiratory chain. The immediate electron acceptor for the enzyme in this species is believed to be ubiquinone. Couples the redox reaction to proton translocation (for every two electrons transferred, four hydrogen ions are translocated across the cytoplasmic membrane), and thus conserves the redox energy in a proton gradient. The protein is NADH-quinone oxidoreductase subunit K of Psychrobacter cryohalolentis (strain ATCC BAA-1226 / DSM 17306 / VKM B-2378 / K5).